Here is a 97-residue protein sequence, read N- to C-terminus: Histone H1.C2 (97 aa).

The tract at residues 24–97 is disordered; sequence AAVPPKKAAP…KKAVKKAPKK (74 aa). The span at 31-97 shows a compositional bias: basic residues; the sequence is AAPKKAVAKK…KKAVKKAPKK (67 aa).

The protein resides in the nucleus. It is found in the chromosome. The chain is Histone H1.C2 from Trypanosoma cruzi.